Reading from the N-terminus, the 342-residue chain is Oxygen-dependent coproporphyrinogen-III oxidase (342 aa).

Substrate is bound at residue Ser-98. His-102 and His-112 together coordinate a divalent metal cation. His-112 functions as the Proton donor in the catalytic mechanism. 114 to 116 (NYR) is a substrate binding site. The a divalent metal cation site is built by His-146 and His-176. Residues 266-301 (YVEFNLVWDRGTIFGLQTNGRTESILMSLPPLARWE) are important for dimerization.

The protein belongs to the aerobic coproporphyrinogen-III oxidase family. As to quaternary structure, homodimer. It depends on a divalent metal cation as a cofactor.

It localises to the cytoplasm. It catalyses the reaction coproporphyrinogen III + O2 + 2 H(+) = protoporphyrinogen IX + 2 CO2 + 2 H2O. It functions in the pathway porphyrin-containing compound metabolism; protoporphyrin-IX biosynthesis; protoporphyrinogen-IX from coproporphyrinogen-III (O2 route): step 1/1. Involved in the heme and chlorophyll biosynthesis. Catalyzes the aerobic oxidative decarboxylation of propionate groups of rings A and B of coproporphyrinogen-III to yield the vinyl groups in protoporphyrinogen-IX. This chain is Oxygen-dependent coproporphyrinogen-III oxidase, found in Prochlorococcus marinus (strain MIT 9515).